The chain runs to 305 residues: ADP,ATP carrier protein (305 aa).

3 Solcar repeats span residues S8–M101, K112–L204, and N212–I298. The next 5 membrane-spanning stretches (helical) occupy residues F10–L37, T78–F102, Y110–L130, F180–L201, and L215–L235. ADP is bound by residues R83 and K95. ADP is bound at residue R239. Positions R239–M244 are important for transport activity. The Nucleotide carrier signature motif signature appears at R239–M244. The chain crosses the membrane as a helical span at residues C275–L295.

Belongs to the mitochondrial carrier (TC 2.A.29) family. In terms of assembly, monomer.

The protein resides in the mitochondrion inner membrane. It carries out the reaction ADP(in) + ATP(out) = ADP(out) + ATP(in). With respect to regulation, the matrix-open state (m-state) is inhibited by the membrane-permeable bongkrekic acid (BKA). The cytoplasmic-open state (c-state) is inhibited by the membrane-impermeable toxic inhibitor carboxyatractyloside (CATR). Functionally, ADP:ATP antiporter that mediates import of ADP into the mitochondrial matrix for ATP synthesis, and export of ATP out to fuel the cell. Cycles between the cytoplasmic-open state (c-state) and the matrix-open state (m-state): operates by the alternating access mechanism with a single substrate-binding site intermittently exposed to either the cytosolic (c-state) or matrix (m-state) side of the inner mitochondrial membrane. The chain is ADP,ATP carrier protein (AAC) from Kluyveromyces lactis (strain ATCC 8585 / CBS 2359 / DSM 70799 / NBRC 1267 / NRRL Y-1140 / WM37) (Yeast).